Reading from the N-terminus, the 414-residue chain is Inositol-tetrakisphosphate 1-kinase (414 aa).

K18 lines the 1D-myo-inositol 1,3,4-trisphosphate pocket. ATP contacts are provided by R106 and K157. Residues E117–T325 enclose the ATP-grasp domain. Residues H167 and K199 each coordinate 1D-myo-inositol 1,3,4-trisphosphate. Residues Q188 to K199, S214, S232, and S236 each bind ATP. Mg(2+) is bound by residues D281, D295, and N297. N297 is a 1D-myo-inositol 1,3,4-trisphosphate binding site. N6-acetyllysine; by EP300 and CREBBP is present on residues K340 and K383. S396 bears the Phosphoserine mark. K410 is subject to N6-acetyllysine; by EP300 and CREBBP.

The protein belongs to the ITPK1 family. Monomer. Interacts with GPS1/COPS1. The cofactor is Mg(2+). Acetylation by EP300 and CREBBP destabilizes ITPK1, and down-regulates enzymatic activity. Deacetylated by SIRT1. As to expression, expressed in brain &gt; heart &gt; skeletal muscle = kidney = pancreas = liver = placenta &gt; lung. In brain, it is expressed in cerebellum, cerebral cortex, medulla, spinal cord, occipital lobe, frontal lobe, temporal lobe and putamen.

It catalyses the reaction 1D-myo-inositol 3,4,5,6-tetrakisphosphate + ATP = 1D-myo-inositol 1,3,4,5,6-pentakisphosphate + ADP + H(+). The enzyme catalyses 1D-myo-inositol 1,3,4-trisphosphate + ATP = 1D-myo-inositol 1,3,4,5-tetrakisphosphate + ADP + H(+). It carries out the reaction 1D-myo-inositol 1,3,4-trisphosphate + ATP = 1D-myo-inositol 1,3,4,6-tetrakisphosphate + ADP + H(+). The catalysed reaction is 1D-myo-inositol 3,4,6-trisphosphate + ATP = 1D-myo-inositol 1,3,4,6-tetrakisphosphate + ADP + H(+). It catalyses the reaction 1D-myo-inositol 1,3,4-trisphosphate + 1D-myo-inositol 1,3,4,5,6-pentakisphosphate = 1D-myo-inositol 3,4,5,6-tetrakisphosphate + 1D-myo-inositol 1,3,4,6-tetrakisphosphate. The enzyme catalyses 1D-myo-inositol 1,3,4-trisphosphate + 1D-myo-inositol 1,3,4,5,6-pentakisphosphate = 1D-myo-inositol 3,4,5,6-tetrakisphosphate + 1D-myo-inositol 1,3,4,5-tetrakisphosphate. Kinase that can phosphorylate various inositol polyphosphate such as Ins(3,4,5,6)P4 or Ins(1,3,4)P3. Phosphorylates Ins(3,4,5,6)P4 at position 1 to form Ins(1,3,4,5,6)P5. This reaction is thought to have regulatory importance, since Ins(3,4,5,6)P4 is an inhibitor of plasma membrane Ca(2+)-activated Cl(-) channels, while Ins(1,3,4,5,6)P5 is not. Also phosphorylates Ins(1,3,4)P3 on O-5 and O-6 to form Ins(1,3,4,6)P4, an essential molecule in the hexakisphosphate (InsP6) pathway. Also acts as an inositol polyphosphate phosphatase that dephosphorylates Ins(1,3,4,5)P4 and Ins(1,3,4,6)P4 to Ins(1,3,4)P3, and Ins(1,3,4,5,6)P5 to Ins(3,4,5,6)P4. May also act as an isomerase that interconverts the inositol tetrakisphosphate isomers Ins(1,3,4,5)P4 and Ins(1,3,4,6)P4 in the presence of ADP and magnesium. Probably acts as the rate-limiting enzyme of the InsP6 pathway. Modifies TNF-alpha-induced apoptosis by interfering with the activation of TNFRSF1A-associated death domain. Plays an important role in MLKL-mediated necroptosis. Produces highly phosphorylated inositol phosphates such as inositolhexakisphosphate (InsP6) which bind to MLKL mediating the release of an N-terminal auto-inhibitory region leading to its activation. Essential for activated phospho-MLKL to oligomerize and localize to the cell membrane during necroptosis. This chain is Inositol-tetrakisphosphate 1-kinase, found in Homo sapiens (Human).